We begin with the raw amino-acid sequence, 122 residues long: Large ribosomal subunit protein uL14 (122 aa).

This sequence belongs to the universal ribosomal protein uL14 family. As to quaternary structure, part of the 50S ribosomal subunit. Forms a cluster with proteins L3 and L19. In the 70S ribosome, L14 and L19 interact and together make contacts with the 16S rRNA in bridges B5 and B8.

In terms of biological role, binds to 23S rRNA. Forms part of two intersubunit bridges in the 70S ribosome. This is Large ribosomal subunit protein uL14 from Rickettsia canadensis (strain McKiel).